Consider the following 118-residue polypeptide: MKMSYLRSGIVGFLAGASLSYAAGVQALISTSKQNKDELLTATEALETDKQLYKKIEKKIEELESSCVKKSSWEIQESEWKAMFQTMRVEYLELLEKQKTLGEVLNKLVEDRQTKFQF.

The first 22 residues, 1 to 22 (MKMSYLRSGIVGFLAGASLSYA), serve as a signal peptide directing secretion. A coiled-coil region spans residues 41 to 71 (TATEALETDKQLYKKIEKKIEELESSCVKKS).

This is an uncharacterized protein from Schizosaccharomyces pombe (strain 972 / ATCC 24843) (Fission yeast).